The following is a 482-amino-acid chain: Glutamyl-tRNA(Gln) amidotransferase subunit A (482 aa).

Catalysis depends on charge relay system residues lysine 74 and serine 149. Residue serine 173 is the Acyl-ester intermediate of the active site.

It belongs to the amidase family. GatA subfamily. In terms of assembly, heterotrimer of A, B and C subunits.

The enzyme catalyses L-glutamyl-tRNA(Gln) + L-glutamine + ATP + H2O = L-glutaminyl-tRNA(Gln) + L-glutamate + ADP + phosphate + H(+). In terms of biological role, allows the formation of correctly charged Gln-tRNA(Gln) through the transamidation of misacylated Glu-tRNA(Gln) in organisms which lack glutaminyl-tRNA synthetase. The reaction takes place in the presence of glutamine and ATP through an activated gamma-phospho-Glu-tRNA(Gln). The protein is Glutamyl-tRNA(Gln) amidotransferase subunit A of Prochlorococcus marinus (strain MIT 9215).